The chain runs to 93 residues: N-myc protein (93 aa).

In terms of assembly, efficient DNA binding requires dimerization with another bHLH protein. Binds DNA as a heterodimer with MAX. In terms of tissue distribution, barely detectable in most tissues assayed.

Its subcellular location is the nucleus. May function as a transcription factor. This chain is N-myc protein (mycn), found in Danio rerio (Zebrafish).